The following is a 507-amino-acid chain: Cobyric acid synthase (507 aa).

Positions 251 to 448 (DIDIAVVHLP…LHGLFDSDAF (198 aa)) constitute a GATase cobBQ-type domain. Residue Cys-332 is the Nucleophile of the active site. His-440 is an active-site residue.

This sequence belongs to the CobB/CobQ family. CobQ subfamily.

Its pathway is cofactor biosynthesis; adenosylcobalamin biosynthesis. Functionally, catalyzes amidations at positions B, D, E, and G on adenosylcobyrinic A,C-diamide. NH(2) groups are provided by glutamine, and one molecule of ATP is hydrogenolyzed for each amidation. The sequence is that of Cobyric acid synthase from Klebsiella pneumoniae subsp. pneumoniae (strain ATCC 700721 / MGH 78578).